The primary structure comprises 252 residues: Imidazole glycerol phosphate synthase subunit HisF (252 aa).

Residues aspartate 11 and aspartate 130 contribute to the active site.

It belongs to the HisA/HisF family. In terms of assembly, heterodimer of HisH and HisF.

Its subcellular location is the cytoplasm. The enzyme catalyses 5-[(5-phospho-1-deoxy-D-ribulos-1-ylimino)methylamino]-1-(5-phospho-beta-D-ribosyl)imidazole-4-carboxamide + L-glutamine = D-erythro-1-(imidazol-4-yl)glycerol 3-phosphate + 5-amino-1-(5-phospho-beta-D-ribosyl)imidazole-4-carboxamide + L-glutamate + H(+). It participates in amino-acid biosynthesis; L-histidine biosynthesis; L-histidine from 5-phospho-alpha-D-ribose 1-diphosphate: step 5/9. Functionally, IGPS catalyzes the conversion of PRFAR and glutamine to IGP, AICAR and glutamate. The HisF subunit catalyzes the cyclization activity that produces IGP and AICAR from PRFAR using the ammonia provided by the HisH subunit. This Hydrogenobaculum sp. (strain Y04AAS1) protein is Imidazole glycerol phosphate synthase subunit HisF.